Reading from the N-terminus, the 359-residue chain is MIKIYTEIERGQNWLQRHQKCCPIFALVLGFTETGLIPGISTAGATPEDRKYTAIADAEFIVKGVSPHPRYPLPPLTVGASPAYITRAVVEKLAIPVLVFNAGLPLPPAVDYIELGGQPARCLSTGRALDLTIVKHLFAQGLTWGEKLARQSSYLIIGECVVGGTTTALAILTGLGYRANGKVNSSHPQCNHAQKQSIVEQGLARKEIFDPFEVIAALGDPQQIFVAGMAIAASGQGGVLLAGGTQMLAVSALIQALVAKYAYPVNWENIIVGTTRWVAEDKTGDTVGLARMIGKLPLLATQLDFSASKYPVLQAYQQGFVKEGVGAGGCAIAACLYRNWTNQDLVKAIENLIGFQLNC.

The protein belongs to the UPF0284 family.

The sequence is that of UPF0284 protein MAE_56900 from Microcystis aeruginosa (strain NIES-843 / IAM M-2473).